The following is an 874-amino-acid chain: Alanine--tRNA ligase (874 aa).

Positions 561, 565, 663, and 667 each coordinate Zn(2+).

It belongs to the class-II aminoacyl-tRNA synthetase family. The cofactor is Zn(2+).

Its subcellular location is the cytoplasm. The enzyme catalyses tRNA(Ala) + L-alanine + ATP = L-alanyl-tRNA(Ala) + AMP + diphosphate. Functionally, catalyzes the attachment of alanine to tRNA(Ala) in a two-step reaction: alanine is first activated by ATP to form Ala-AMP and then transferred to the acceptor end of tRNA(Ala). Also edits incorrectly charged Ser-tRNA(Ala) and Gly-tRNA(Ala) via its editing domain. This is Alanine--tRNA ligase from Trichodesmium erythraeum (strain IMS101).